Reading from the N-terminus, the 150-residue chain is UPF0102 protein sll0189 (150 aa).

Belongs to the UPF0102 family.

This Synechocystis sp. (strain ATCC 27184 / PCC 6803 / Kazusa) protein is UPF0102 protein sll0189.